Reading from the N-terminus, the 217-residue chain is MSLRSLFVAGLATLALAVPAPQIQARQGMSSNELESGPCRDVTFIFARGSTEQGNMGLIVGPGVCSSLKKDLGSDKVACQGVGGAYTAQLAPNFLSQNTNQASINAATDMFDLANTKCPNTKIVAGGYSQGSAVIDNTIQALGSDLKAKVKGVVLFGFTRNVADKGQIPGYPKDQTKIYCAVGDMVCVNTLIITPAHLTYGADAGDAAKFLASKVQE.

The N-terminal stretch at 1–17 is a signal peptide; that stretch reads MSLRSLFVAGLATLALA. Disulfide bonds link Cys39/Cys118 and Cys65/Cys79. The Nucleophile role is filled by Ser129. Residues Cys180 and Cys187 are joined by a disulfide bond. Residue Asp184 is part of the active site. Residue His197 is the Proton donor/acceptor of the active site.

Belongs to the cutinase family.

Its subcellular location is the secreted. The catalysed reaction is cutin + H2O = cutin monomers.. In terms of biological role, catalyzes the hydrolysis of complex carboxylic polyesters found in the cell wall of plants. Degrades cutin, a macromolecule that forms the structure of the plant cuticle. The sequence is that of Probable cutinase 3 from Aspergillus fumigatus (strain CBS 144.89 / FGSC A1163 / CEA10) (Neosartorya fumigata).